The chain runs to 277 residues: Diaminopimelate epimerase (277 aa).

Positions 15, 48, and 66 each coordinate substrate. Cysteine 75 functions as the Proton donor in the catalytic mechanism. Substrate is bound by residues 76 to 77 (GN), asparagine 156, asparagine 189, and 207 to 208 (ER). Residue cysteine 216 is the Proton acceptor of the active site. Position 217 to 218 (217 to 218 (GS)) interacts with substrate.

Belongs to the diaminopimelate epimerase family. In terms of assembly, homodimer.

The protein localises to the cytoplasm. The enzyme catalyses (2S,6S)-2,6-diaminopimelate = meso-2,6-diaminopimelate. It functions in the pathway amino-acid biosynthesis; L-lysine biosynthesis via DAP pathway; DL-2,6-diaminopimelate from LL-2,6-diaminopimelate: step 1/1. In terms of biological role, catalyzes the stereoinversion of LL-2,6-diaminopimelate (L,L-DAP) to meso-diaminopimelate (meso-DAP), a precursor of L-lysine and an essential component of the bacterial peptidoglycan. The sequence is that of Diaminopimelate epimerase from Acidiphilium cryptum (strain JF-5).